Reading from the N-terminus, the 88-residue chain is ATP synthase subunit c (88 aa).

A run of 2 helical transmembrane segments spans residues 10-30 and 68-88; these read ILAA…GPGI and GIYS…IRLL.

This sequence belongs to the ATPase C chain family. F-type ATPases have 2 components, F(1) - the catalytic core - and F(0) - the membrane proton channel. F(1) has five subunits: alpha(3), beta(3), gamma(1), delta(1), epsilon(1). F(0) has three main subunits: a(1), b(2) and c(10-14). The alpha and beta chains form an alternating ring which encloses part of the gamma chain. F(1) is attached to F(0) by a central stalk formed by the gamma and epsilon chains, while a peripheral stalk is formed by the delta and b chains.

The protein resides in the cell membrane. F(1)F(0) ATP synthase produces ATP from ADP in the presence of a proton or sodium gradient. F-type ATPases consist of two structural domains, F(1) containing the extramembraneous catalytic core and F(0) containing the membrane proton channel, linked together by a central stalk and a peripheral stalk. During catalysis, ATP synthesis in the catalytic domain of F(1) is coupled via a rotary mechanism of the central stalk subunits to proton translocation. Its function is as follows. Key component of the F(0) channel; it plays a direct role in translocation across the membrane. A homomeric c-ring of between 10-14 subunits forms the central stalk rotor element with the F(1) delta and epsilon subunits. This chain is ATP synthase subunit c, found in Alkaliphilus oremlandii (strain OhILAs) (Clostridium oremlandii (strain OhILAs)).